Reading from the N-terminus, the 247-residue chain is 3(1)-hydroxy-L-isoleucine 4-dioxygenase (247 aa).

Fe cation is bound by residues His160, Asp162, and His213.

It belongs to the iron/ascorbate-dependent oxidoreductase family. It depends on L-ascorbate as a cofactor. Fe(2+) is required as a cofactor.

The enzyme catalyses 3(1)-hydroxy-L-isoleucine + 2-oxoglutarate + O2 = (4S)-3(1),4-dihydroxy-L-isoleucine + succinate + CO2. Catalyzes the hydroxylation of L-4'-hydroxyisoleucine (4'-HIL) at the C-4 position to form L-4,4'-dihydroxyisoleucine (4,4'-DIHIL). Together with HilA, catalyzes the two step conversion of L-isoleucine into L-4,4'-dihydroxyisoleucine. In vitro, in the absence of HilA, can also catalyze the oxidation of L-methionine and the C-4-hydroxylation of L-leucine and L-isoleucine. The sequence is that of 3(1)-hydroxy-L-isoleucine 4-dioxygenase from Pantoea ananatis (strain AJ13355).